Consider the following 220-residue polypeptide: Uracil-DNA glycosylase 1 (220 aa).

Asp-65 (proton acceptor) is an active-site residue.

Belongs to the uracil-DNA glycosylase (UDG) superfamily. UNG family.

It is found in the cytoplasm. The enzyme catalyses Hydrolyzes single-stranded DNA or mismatched double-stranded DNA and polynucleotides, releasing free uracil.. Excises uracil residues from the DNA which can arise as a result of misincorporation of dUMP residues by DNA polymerase or due to deamination of cytosine. The protein is Uracil-DNA glycosylase 1 of Bacteroides fragilis (strain YCH46).